We begin with the raw amino-acid sequence, 122 residues long: Large ribosomal subunit protein uL14 (122 aa).

This sequence belongs to the universal ribosomal protein uL14 family. In terms of assembly, part of the 50S ribosomal subunit. Forms a cluster with proteins L3 and L19. In the 70S ribosome, L14 and L19 interact and together make contacts with the 16S rRNA in bridges B5 and B8.

Functionally, binds to 23S rRNA. Forms part of two intersubunit bridges in the 70S ribosome. The protein is Large ribosomal subunit protein uL14 of Pelobacter propionicus (strain DSM 2379 / NBRC 103807 / OttBd1).